The sequence spans 89 residues: Small ribosomal subunit protein uS14A (89 aa).

It belongs to the universal ribosomal protein uS14 family. In terms of assembly, part of the 30S ribosomal subunit. Contacts proteins S3 and S10.

In terms of biological role, binds 16S rRNA, required for the assembly of 30S particles and may also be responsible for determining the conformation of the 16S rRNA at the A site. This is Small ribosomal subunit protein uS14A from Lactococcus lactis subsp. lactis (strain IL1403) (Streptococcus lactis).